Here is a 258-residue protein sequence, read N- to C-terminus: UDP-2,3-diacylglucosamine hydrolase (258 aa).

The Mn(2+) site is built by Asp-15, His-17, Asp-48, Asn-88, and His-123. Residue 88-89 coordinates substrate; sequence NR. The substrate site is built by Asp-131, Ser-169, Asn-173, Lys-176, and His-204. Mn(2+) contacts are provided by His-204 and His-206.

This sequence belongs to the LpxH family. It depends on Mn(2+) as a cofactor.

It localises to the cell inner membrane. It catalyses the reaction UDP-2-N,3-O-bis[(3R)-3-hydroxytetradecanoyl]-alpha-D-glucosamine + H2O = 2-N,3-O-bis[(3R)-3-hydroxytetradecanoyl]-alpha-D-glucosaminyl 1-phosphate + UMP + 2 H(+). It functions in the pathway glycolipid biosynthesis; lipid IV(A) biosynthesis; lipid IV(A) from (3R)-3-hydroxytetradecanoyl-[acyl-carrier-protein] and UDP-N-acetyl-alpha-D-glucosamine: step 4/6. In terms of biological role, hydrolyzes the pyrophosphate bond of UDP-2,3-diacylglucosamine to yield 2,3-diacylglucosamine 1-phosphate (lipid X) and UMP by catalyzing the attack of water at the alpha-P atom. Involved in the biosynthesis of lipid A, a phosphorylated glycolipid that anchors the lipopolysaccharide to the outer membrane of the cell. In Bordetella bronchiseptica (strain ATCC BAA-588 / NCTC 13252 / RB50) (Alcaligenes bronchisepticus), this protein is UDP-2,3-diacylglucosamine hydrolase.